A 240-amino-acid chain; its full sequence is Serine protease SplB (240 aa).

The N-terminal stretch at Met-1–Ala-36 is a signal peptide. Residues His-75, Asp-113, and Ser-193 each act as charge relay system in the active site.

It belongs to the peptidase S1B family.

Its subcellular location is the secreted. In terms of biological role, serine protease that cleaves specifically after the sequence Trp-Glu-Leu-Gln. The sequence is that of Serine protease SplB (splB) from Staphylococcus aureus (strain MW2).